We begin with the raw amino-acid sequence, 1359 residues long: MYSVEDLLISHGYKLSRDPPASREDNPKGRQAARTGTRAGQGLQNGHEDGPAALAHRKTSAGKGHVSDSESRRSTPRGHGEPQSTSASRTSEAGFCNQPPSAWSSHPPTGNDQAYRRRGRQEARSQKPREHENLEARGMAQAHSLPVHVREGPWEVGGRSEHVMKKPVWEEELRMSGPAKWQNVSLESWNQPRKLGRQMSDGDGERLFQDLYPFIQGEHVLNSQNKGKSRSLPRVLSPESLSCTEIPIPLNERHSPKMPPYPPTCAPNLDSTRNSEKSGCSAPFPRPKFGRPLKPPSYSSHQQSRGGADSSDSQDSQQMDAYVPRHELCLSDPGLEPPVYVPPPSYRSPPQNIPNPYLEDTVPINVCGGHSQQQSPTEKAGASGQPPSGPPGTGNEYGVSPRLPQGLPAHPRPVTAYDGFVQYIPFDDPRLRHFKLAQPQGFCEDIKLDDKSYNSSPVTAQEPAHGGMQPDGAIWNPQSLIPPSGDERGLVLADSSPRWLWGQPPGDGENSGLPNQRDRCVARGQWPDVRGSQHGHTGRQVSSPYSQGESTCETQTKLKKFQTGTRTKKSSKKKMNETIFCLVSIPVKSESHLPDRDMDNNDLKPSADQKNGSDKSPALQEQSLLSMSSTDLELQALTGSMGGRTEFQKQDLGEPEEDRQTNDLSFIHLTKHRELKHSGSWPGHRYRDQQTQTSFSEEPQSSQLLPGAKLGGPSRAALSPKCSDPAASEAQTHTAFPTGDHKQRPSARNLKGHRSLSPSSNSAFSRTSLSVDQAPTPKAGRSQPCVDVHGLGAHPGPKREVVKGEPTGPCNSKQLFGQFLLKPVSRRPWDLISQLESFNKELQEEEESSSSSSSSSSSSEESEAEPQQENRAHCRQEDVGFRGNSPEMRVEPQPRMWVPESPVCRSGRGESKSESWSEELQPGHPRAWPPSPGRFRVEEGGGAPFCSADGSTSAEKRHLEVSNGMDELAGSPFPVTRMSSRSSDAKPLPASYPAEPREPQESPKITSAFSSVKPSEAVPRKFDSGGERGAGLPLSLSNKNRGLSAPDLRSVGLTPGQEQGASELEGSLGEASTIEIPPGESLQARAARILGIEVAVESLLPGIRRAGQNQPAEPDASACTPESPQEELLSRPAPADVPRVSTDAFYGRRKCGWTKSPLFVGDRDSARRAPQAFEHSDVDGVVTSTDPVPEPEPSPLESKFFEQKDVETKPPFRSTLFHFVERTPSVAGSEKRLRSPSKVIESLQEKLASPPRRADPDRLMRMKEVSSVSRMRVLSFRNADSQEDAEELKATTRGQAGLPGGLVSPGSGDRAQRLGHSLSVSKDSISREEKEHPAAQKEKSMDQDFWCPDSYDPSRVERV.

9 disordered regions span residues 1 to 147, 249 to 411, 454 to 554, 591 to 813, 840 to 1076, 1105 to 1141, 1157 to 1207, 1225 to 1260, and 1276 to 1359; these read MYSV…SLPV, PLNE…PAHP, NSSP…TCET, SHLP…CNSK, KELQ…TIEI, RAGQ…PRVS, PLFV…KDVE, SVAG…DRLM, and FRNA…VERV. A compositionally biased stretch (basic and acidic residues) spans 15–28; the sequence is LSRDPPASREDNPK. Composition is skewed to polar residues over residues 82-91 and 98-112; these read PQSTSASRTS and QPPS…TGND. Residues 120 to 135 show a composition bias toward basic and acidic residues; that stretch reads RQEARSQKPREHENLE. Low complexity predominate over residues 302–321; sequence QQSRGGADSSDSQDSQQMDA. Positions 335 to 353 are enriched in pro residues; it reads LEPPVYVPPPSYRSPPQNI. The span at 539–554 shows a compositional bias: polar residues; sequence RQVSSPYSQGESTCET. Residues 591–613 show a composition bias toward basic and acidic residues; the sequence is SHLPDRDMDNNDLKPSADQKNGS. 3 stretches are compositionally biased toward polar residues: residues 619–632, 689–704, and 756–773; these read LQEQ…STDL, QQTQ…SSQL, and LSPS…SVDQ. The span at 849–859 shows a compositional bias: low complexity; it reads SSSSSSSSSSS. The segment covering 868 to 880 has biased composition (basic and acidic residues); it reads QENRAHCRQEDVG. Over residues 1003-1013 the composition is skewed to polar residues; that stretch reads PKITSAFSSVK. 2 positions are modified to phosphoserine: Ser-1044 and Ser-1050. Position 1194 is a phosphoserine (Ser-1194). Ser-1281 is subject to Phosphoserine. Residues 1324-1342 are compositionally biased toward basic and acidic residues; that stretch reads SISREEKEHPAAQKEKSMD.

The protein localises to the cell junction. It localises to the adherens junction. The polypeptide is Junctional cadherin 5-associated protein (Homo sapiens (Human)).